Here is a 793-residue protein sequence, read N- to C-terminus: Phenylalanine--tRNA ligase beta subunit (793 aa).

The tRNA-binding domain maps to 39–148 (AGQFTHVIVA…DEAPIGMDLR (110 aa)). In terms of domain architecture, B5 spans 401 to 477 (PGTVSFLFDT…RLYGYDKLQA (77 aa)). Positions 455, 461, 464, and 465 each coordinate Mg(2+). The region spanning 698 to 792 (SKYPQIRRDL…LENEFSILLR (95 aa)) is the FDX-ACB domain.

The protein belongs to the phenylalanyl-tRNA synthetase beta subunit family. Type 1 subfamily. Tetramer of two alpha and two beta subunits. Mg(2+) serves as cofactor.

The protein localises to the cytoplasm. It carries out the reaction tRNA(Phe) + L-phenylalanine + ATP = L-phenylalanyl-tRNA(Phe) + AMP + diphosphate + H(+). The polypeptide is Phenylalanine--tRNA ligase beta subunit (Legionella pneumophila (strain Paris)).